The sequence spans 297 residues: 4-hydroxy-tetrahydrodipicolinate synthase (297 aa).

T51 lines the pyruvate pocket. Y139 serves as the catalytic Proton donor/acceptor. K167 acts as the Schiff-base intermediate with substrate in catalysis. A pyruvate-binding site is contributed by V209.

This sequence belongs to the DapA family. In terms of assembly, homotetramer; dimer of dimers.

It localises to the cytoplasm. It catalyses the reaction L-aspartate 4-semialdehyde + pyruvate = (2S,4S)-4-hydroxy-2,3,4,5-tetrahydrodipicolinate + H2O + H(+). Its pathway is amino-acid biosynthesis; L-lysine biosynthesis via DAP pathway; (S)-tetrahydrodipicolinate from L-aspartate: step 3/4. Its function is as follows. Catalyzes the condensation of (S)-aspartate-beta-semialdehyde [(S)-ASA] and pyruvate to 4-hydroxy-tetrahydrodipicolinate (HTPA). The sequence is that of 4-hydroxy-tetrahydrodipicolinate synthase from Albidiferax ferrireducens (strain ATCC BAA-621 / DSM 15236 / T118) (Rhodoferax ferrireducens).